Reading from the N-terminus, the 138-residue chain is Putative pre-16S rRNA nuclease (138 aa).

Belongs to the YqgF nuclease family.

It is found in the cytoplasm. Its function is as follows. Could be a nuclease involved in processing of the 5'-end of pre-16S rRNA. The chain is Putative pre-16S rRNA nuclease from Salmonella dublin (strain CT_02021853).